The chain runs to 323 residues: V-type ATP synthase subunit C (323 aa).

This sequence belongs to the V-ATPase V0D/AC39 subunit family.

Produces ATP from ADP in the presence of a proton gradient across the membrane. The chain is V-type ATP synthase subunit C from Thermus thermophilus (strain ATCC BAA-163 / DSM 7039 / HB27).